A 300-amino-acid chain; its full sequence is UDP-3-O-acyl-N-acetylglucosamine deacetylase (300 aa).

Residues histidine 76, histidine 235, and aspartate 239 each contribute to the Zn(2+) site. Histidine 262 serves as the catalytic Proton donor.

Belongs to the LpxC family. It depends on Zn(2+) as a cofactor.

It carries out the reaction a UDP-3-O-[(3R)-3-hydroxyacyl]-N-acetyl-alpha-D-glucosamine + H2O = a UDP-3-O-[(3R)-3-hydroxyacyl]-alpha-D-glucosamine + acetate. It participates in glycolipid biosynthesis; lipid IV(A) biosynthesis; lipid IV(A) from (3R)-3-hydroxytetradecanoyl-[acyl-carrier-protein] and UDP-N-acetyl-alpha-D-glucosamine: step 2/6. Its function is as follows. Catalyzes the hydrolysis of UDP-3-O-myristoyl-N-acetylglucosamine to form UDP-3-O-myristoylglucosamine and acetate, the committed step in lipid A biosynthesis. The chain is UDP-3-O-acyl-N-acetylglucosamine deacetylase from Halorhodospira halophila (strain DSM 244 / SL1) (Ectothiorhodospira halophila (strain DSM 244 / SL1)).